Reading from the N-terminus, the 244-residue chain is Phosphoadenosine 5'-phosphosulfate reductase (244 aa).

Cysteine 239 functions as the Nucleophile; cysteine thiosulfonate intermediate in the catalytic mechanism.

The protein belongs to the PAPS reductase family. CysH subfamily.

It is found in the cytoplasm. It carries out the reaction [thioredoxin]-disulfide + sulfite + adenosine 3',5'-bisphosphate + 2 H(+) = [thioredoxin]-dithiol + 3'-phosphoadenylyl sulfate. The protein operates within sulfur metabolism; hydrogen sulfide biosynthesis; sulfite from sulfate: step 3/3. Its function is as follows. Catalyzes the formation of sulfite from phosphoadenosine 5'-phosphosulfate (PAPS) using thioredoxin as an electron donor. This is Phosphoadenosine 5'-phosphosulfate reductase from Klebsiella pneumoniae subsp. pneumoniae (strain ATCC 700721 / MGH 78578).